A 475-amino-acid polypeptide reads, in one-letter code: Stromelysin-1 (475 aa).

The N-terminal stretch at 1 to 17 (MKGLPVLLWLCTAVCSS) is a signal peptide. Positions 18-97 (YPLHGSEEDA…PRCGVPDVGG (80 aa)) are cleaved as a propeptide — activation peptide. The Cysteine switch signature appears at 88–95 (PRCGVPDV). Cys90 contacts Zn(2+). An N-linked (GlcNAc...) asparagine glycan is attached at Asn118. The Ca(2+) site is built by Asp122 and Asp156. Zn(2+) contacts are provided by His166 and Asp168. Residues Asp173, Gly174, Gly176, and Val178 each contribute to the Ca(2+) site. Zn(2+) is bound at residue His181. Gly188, Asn190, and Asp192 together coordinate Ca(2+). His194 provides a ligand contact to Zn(2+). 3 residues coordinate Ca(2+): Asp196, Asp197, and Glu199. Residue His216 participates in Zn(2+) binding. Glu217 is an active-site residue. Positions 220 and 226 each coordinate Zn(2+). Hemopexin repeat units follow at residues 285 to 334 (LPMC…WPSL), 335 to 381 (PSNM…GLPE), 383 to 431 (VQKI…FPGI), and 432 to 475 (GTKV…WFNC). Residues Cys288 and Cys475 are joined by a disulfide bond. Asp295 is a Ca(2+) binding site. Residues Asp387 and Asp436 each coordinate Ca(2+).

The protein belongs to the peptidase M10A family. Ca(2+) serves as cofactor. Zn(2+) is required as a cofactor.

Its subcellular location is the secreted. The protein resides in the extracellular space. It localises to the extracellular matrix. The enzyme catalyses Preferential cleavage where P1', P2' and P3' are hydrophobic residues.. With respect to regulation, inhibited by a synthetic peptide corresponding to the inhibitory cysteine switch motif. Inhibited by ethylenediaminetetraacetic acid (EDTA), 1,10-pheanthroline, 2-mecaptoethanol, dithiothreitol and metalloproteinase inhibitor protein TIMP. Functionally, can degrade fibronectin, laminin, gelatins of type I, III, IV, and V; collagens III, IV, X, and IX, and cartilage proteoglycans. Activates procollagenase. Its function is as follows. Metalloproteinase with a rather broad substrate specificity that can degrade fibronectin, laminin, gelatins of type I, III, IV, and V; collagens III, IV, X, and IX, and cartilage proteoglycans. Activates different molecules including growth factors, plasminogen or other matrix metalloproteinases such as MMP9. Once released into the extracellular matrix (ECM), the inactive pro-enzyme is activated by the plasmin cascade signaling pathway. Also acts intracellularly. For example, in dopaminergic neurons, gets activated by the serine protease HTRA2 upon stress and plays a pivotal role in DA neuronal degeneration by mediating microglial activation and alpha-synuclein/SNCA cleavage. In addition, plays a role in immune response and possesses antiviral activity against various viruses. Mechanistically, translocates from the cytoplasm into the cell nucleus upon virus infection to influence NF-kappa-B activities. In Rattus norvegicus (Rat), this protein is Stromelysin-1 (Mmp3).